The primary structure comprises 112 residues: Protein NIM1-INTERACTING 3 (112 aa).

2 disordered regions span residues 1–20 (MDRD…EEKM) and 77–112 (EKAA…NLSL). Coiled-coil stretches lie at residues 1 to 35 (MDRD…EMRK) and 69 to 96 (NKAE…SKEK). Residues 77–89 (EKAANESSSASNE) are compositionally biased toward low complexity.

It belongs to the NPR1-interactor family. Interacts with NPR1 C-terminal region.

It is found in the nucleus. The protein is Protein NIM1-INTERACTING 3 of Arabidopsis thaliana (Mouse-ear cress).